The sequence spans 416 residues: L-threonine dehydratase biosynthetic IlvA (416 aa).

K51 bears the N6-(pyridoxal phosphate)lysine mark. Pyridoxal 5'-phosphate is bound by residues N78, 184–188 (GGGGL), and S309. One can recognise an ACT-like domain in the interval 333–407 (HYFVINFPQR…FDNRYVNLHG (75 aa)).

This sequence belongs to the serine/threonine dehydratase family. In terms of assembly, homotetramer. The cofactor is pyridoxal 5'-phosphate.

It catalyses the reaction L-threonine = 2-oxobutanoate + NH4(+). It participates in amino-acid biosynthesis; L-isoleucine biosynthesis; 2-oxobutanoate from L-threonine: step 1/1. Functionally, catalyzes the anaerobic formation of alpha-ketobutyrate and ammonia from threonine in a two-step reaction. The first step involved a dehydration of threonine and a production of enamine intermediates (aminocrotonate), which tautomerizes to its imine form (iminobutyrate). Both intermediates are unstable and short-lived. The second step is the nonenzymatic hydrolysis of the enamine/imine intermediates to form 2-ketobutyrate and free ammonia. In the low water environment of the cell, the second step is accelerated by RidA. This Lactococcus lactis subsp. lactis (strain IL1403) (Streptococcus lactis) protein is L-threonine dehydratase biosynthetic IlvA (ilvA).